The following is an 89-amino-acid chain: Small ribosomal subunit protein uS15 (89 aa).

It belongs to the universal ribosomal protein uS15 family. Part of the 30S ribosomal subunit. Forms a bridge to the 50S subunit in the 70S ribosome, contacting the 23S rRNA.

In terms of biological role, one of the primary rRNA binding proteins, it binds directly to 16S rRNA where it helps nucleate assembly of the platform of the 30S subunit by binding and bridging several RNA helices of the 16S rRNA. Functionally, forms an intersubunit bridge (bridge B4) with the 23S rRNA of the 50S subunit in the ribosome. This is Small ribosomal subunit protein uS15 from Desulforapulum autotrophicum (strain ATCC 43914 / DSM 3382 / VKM B-1955 / HRM2) (Desulfobacterium autotrophicum).